The primary structure comprises 414 residues: Proton/glutamate-aspartate symporter (414 aa).

Residues 1–3 are Cytoplasmic-facing; that stretch reads MKK. The chain crosses the membrane as a helical span at residues 4–24; sequence LIAFQILIALAVGAVIGHFFP. At 25–42 the chain is on the extracellular side; it reads DFGMALRPVGDGFIRLIK. Residues 43–63 traverse the membrane as a helical segment; the sequence is MIVVPIVFSTIVIGAAGSGSM. Topologically, residues 64-73 are cytoplasmic; sequence KKMGSLGIKT. A helical membrane pass occupies residues 74 to 94; sequence IIWFEVITTLVLGLGLLLANV. Residues 95-144 lie on the Extracellular side of the membrane; the sequence is LKPGVGLDLSHLAKKDIHELSGYTDKVVDFKQMILDIIPTNIIDVMARND. A helical transmembrane segment spans residues 145–165; the sequence is LLAVIFFAILFGVAAAGIGKA. The Cytoplasmic portion of the chain corresponds to 166–182; that stretch reads SEPVMKFFESTAQIMFK. Residues 183-203 form a helical membrane-spanning segment; the sequence is LTQIVMVTAPIGVLALMAASV. Residues 204–219 lie on the Extracellular side of the membrane; sequence GQYGIELLLPMFKLVG. Residues 220–240 form a helical membrane-spanning segment; it reads TVFLGLFLILFVLFPLVGLIF. Glutamine 241 is a topological domain (cytoplasmic). A helical transmembrane segment spans residues 242–262; it reads IKYFEVLKMIWDLFLIAFSTT. Residues 263-300 lie on the Extracellular side of the membrane; sequence STETILPQLMDRMEKYGCPKRVVSFVVPSGLSLNCDGS. A helical membrane pass occupies residues 301-321; it reads SLYLSVSCIFLAQAFQVDMTL. The Cytoplasmic segment spans residues 322–324; that stretch reads SQQ. Helical transmembrane passes span 325–345 and 346–366; these read LLMM…PSGS and LVVL…VAII. The Cytoplasmic portion of the chain corresponds to 367 to 414; it reads AGVDRVMDMARTGVNVPGHAIACIVVSKWEKAFRQKEWVSANSQTESI.

The protein belongs to the dicarboxylate/amino acid:cation symporter (DAACS) (TC 2.A.23) family.

The protein localises to the cell membrane. With respect to regulation, glutamate uptake is inhibited by beta-hydroxyaspartate and cysteic acid. In terms of biological role, catalyzes the proton-dependent, binding-protein-independent transport of glutamate and aspartate. The chain is Proton/glutamate-aspartate symporter from Bacillus subtilis (strain 168).